A 1985-amino-acid polypeptide reads, in one-letter code: MAPSHNVVLLVDTAESSDKSRLRRVSLRLLNFLACRAGLGQVRWSYRFLNSSGGRCRPPRRSDLRELGPRGWEEFEDELEACWERARNCRPSSTQSSRAQLLQTALMETLADFQWDRPDITSPTKPTLLRSRRGRIVAADEPLKDDSPDNFINPHSRNSIFLLSSCPHSGTELGQFAATSGDFSTQKVMDKLLPKSLQKIVSSKRVRVYWLDTSDWTQFGSSSDHSGYWTMVELMHQVEGRILPSESILGSSCQKAKTLPSFSVPPINIPFESVLNYLIFSEPDYQLWFPRRDGILFLTGKDGTKQLDCAVSLEPVSMIQKLSTSLMTIELKGTMQNCNLPLAGLRVETWLLHNSDCVQLQKLTKELMLKELHMIATVTLEDDVLPRTGILSPLSETAAVLNVICSERTLGLDNLHVQGSVHETDKETFSDLPDIVMSVLNHVYSSEDNTLAPDFPVPEWIKQELSQSSRWTSSVTARWYPLSGVSGASCNLMESFRLINAASSNCDEHLKFDQELTNYLSEFYQKKSVDDAGLGVHRENQKKSGLPRTPVRQKMKTLPRALQMLNAARLNVKAQKADSTLPVPNEKNSQMKRRSSGKQDNKPKQLKPTEFQSEDGLISYIKENYEEAVSLVDHSTMTWARDTLTTIKSYLKSIGSEQIETEAIDKVKLLFKTSKVIRQNYRNNQDKEVKLKECQLQVFLRLEMFVQCPVIQMDSDELELIIEEITDILRIVSLTEDPLFLTKFLEVDVLTQYIASVPKILADIYFSLGTQIPEVLVLVLPSDGDDSIMHEEKSVKSQPSTSRVPSVAPIGAETDQLEDLRTRSAKKRRSTALARHRSVAESSQSFRQIEVPKRQPNKENVQSNAVVVLEKLKLPLPAQPQKDAEAKVRRNLFIQETRSPSKRCSKMPRSQSVSAVESLKRKRSKSHDGSKDHHKLLTKKVSETPVHKQTANRLLLRQIKGRPSESNSNISIVEESPEKEIRDIDLRRSPRIKQLSLTRRNSSSFYASQPKSRNLERVNSATQLQQSRERPGSCLISEVKTPKRLLFGEVLGMISPPTTKRSRRILDMVNPVYKTPGKTPRKTPSKNIPNFEDQSGNMLVKSPCTPYTPRTPSRTPKRLKTPSKGSTERKKAAKNLGKLFSPSKPEEKSPLKLWGRRSERLAQMTPGKDGSPYKQSVCQTLMEVKTPQKLQRLESKDFRTPSRTPTRSNNTTPAKQSMQISNTPRKSDLKHPQEHESRGPSGYILWTPQKRILASVPHTPILQTPQKPISASVPRTPVCRTPQKAILSSVPSTPVCQTPNKAILTSVSRTPVYQTPQKAILASVMSTPVYQTPQKPVLASVPTTPILKTPQRSALASVSHTPSPKKYIMKELTVAITRMRECTPEKVLGSNLSSSATPSSALKSFCSEKTTSVCQTPKKSSIALLKPCDSLEFSGAPERLMDSLCSNKDSTKAETACTVPSQISTQMQNVINAGECTDSLSQTSVSSPSIPFTDKSLSPDLKDALSDVTSSKAEGVTIVSEKLDSSSMDSQEATDSFINSSQTEESIDISEARVVSTEASELKMKVLITRKPSGSGVSYLPTTPKCLGNVCSTSTYGLRCTPDRRQREAAARLGTPEIPAKFSTPKSHCKMIPQSIYEVELEMQESGLPKLRFKRTDSNSTIDMDVNKTPKISRKRKGDESPFNEKWCSKHAVRTEPACVSPSCVRTSHYTPGKSGIQTFICQSYTPNRCLSAAASPSQSDAGVPWTPSPKEKLSTDVINSWPRKKKASALCTNLLKCDKIPEYAEEDGGDFELEGVSKLLEKSPVIEQQSKVDGGTFGLRSRKRVFSLVSPTKETENPVKRVCTFNRHEDSSTATHRHQTKEEMEIFSSDQSRSSYLSSSQQSICDDVFNMSDFTPPSKVPKNPLSACGLLTLTQSPLLYKGKTPSSKRKEKIQDVFSDGDSDHGTPTLKRPTNPAAVSDDSPFRKVNPLRSISKTYSRKKLIT.

8 disordered regions span residues Ala574–Thr609, Glu791–Lys858, Ile894–Glu974, Arg999–Ser1033, Val1072–Arg1156, Val1184–Tyr1243, His1849–Ser1875, and Phe1938–Arg1966. Basic residues predominate over residues Arg823–Arg837. A compositionally biased stretch (low complexity) spans Ser964–Glu974. Polar residues-rich tracts occupy residues Arg999–Gln1026 and Ser1085–Asn1097. Over residues Thr1105–Arg1114 the composition is skewed to low complexity. Basic and acidic residues-rich tracts occupy residues Lys1144–Arg1156 and Gln1191–Thr1200. Residues Pro1201–Pro1224 show a composition bias toward polar residues. Basic and acidic residues predominate over residues Arg1225 to Arg1238.

The protein belongs to the treslin family. In terms of assembly, interacts with topbp1 (via BRCT domains); interaction is cdk2-dependent. Component of the replisome complex. Phosphorylated during interphase. Cdk2 promotes both phosphorylation and formation of a ticrr-topbp1 complex.

Its subcellular location is the nucleus. Regulator of DNA replication and S/M and G2/M checkpoints. Regulates the triggering of DNA replication initiation via its interaction with topbp1 by participating in cdk2-mediated loading of cdc45l onto replication origins. Required for the transition from pre-replication complex (pre-RC) to pre-initiation complex (pre-IC). Required to prevent mitotic entry after treatment with ionizing radiation. This is Treslin (ticrr) from Xenopus laevis (African clawed frog).